A 147-amino-acid chain; its full sequence is Mineralocorticoid receptor (147 aa).

Residues 1–147 enclose the NR LBD domain; the sequence is FALSWRSYKH…SQALKVEFPA (147 aa). 21-hydroxyprogesterone contacts are provided by arginine 6 and threonine 134. Aldosterone is bound by residues arginine 6 and threonine 134. Progesterone-binding residues include arginine 6 and threonine 134.

Belongs to the nuclear hormone receptor family. NR3 subfamily.

Its subcellular location is the cytoplasm. The protein localises to the nucleus. Receptor for both mineralocorticoids (MC) such as aldosterone and glucocorticoids (GC) such as corticosterone or cortisol. Binds to mineralocorticoid response elements (MRE) and transactivates target genes. The effect of MC is to increase ion and water transport and thus raise extracellular fluid volume and blood pressure and lower potassium levels. This Gallus gallus (Chicken) protein is Mineralocorticoid receptor (NR3C2).